The following is a 449-amino-acid chain: GPI mannosyltransferase 2 (449 aa).

Over 1–7 (MTEKVTK) the chain is Cytoplasmic. The helical transmembrane segment at 8-28 (LALASRLIVLLVQLVANGALP) threads the bilayer. Residues 29 to 82 (EHKPDVFRMPVSSDQNASWIDKVIKRCLGGLRHWDGEYFLHIAENLYSYENTLA) lie on the Lumenal side of the membrane. N44 carries an N-linked (GlcNAc...) asparagine glycan. Residues 83 to 103 (FYPLYPVVVRHVGQAVEAIGI) traverse the membrane as a helical segment. Residues 104–109 (SLSQES) are Cytoplasmic-facing. Residues 110–130 (ILLVVAVALNFWLFCESANLL) traverse the membrane as a helical segment. Residues 131-148 (FQLTQVLFNDLNKSWNAA) are Lumenal-facing. N-linked (GlcNAc...) asparagine glycosylation is present at N142. Residues 149 to 169 (LIYCFNPATIFFTAAYSETFF) traverse the membrane as a helical segment. Residues 170–196 (AYSSLHLMLECSKPTGSFRYLRLGTAL) are Cytoplasmic-facing. Residues 197–217 (AACLLCRSNGLITLGYPLYFF) traverse the membrane as a helical segment. At 218-235 (GRQLLLKNKEPNTCMQLT) the chain is on the lumenal side. A helical membrane pass occupies residues 236-256 (QMTLTILGAIGILHTYYFYIY). Residues 257–368 (RLYCLPNTRP…GFKELIRDHT (112 aa)) lie on the Cytoplasmic side of the membrane. Residues 369-389 (TFPFVLHAAILTLVCTVYVHI) traverse the membrane as a helical segment. Residues 390–423 (QVSTRLLASATPVFYWFAADHMPKTLAQLKLRSK) are Lumenal-facing. A helical transmembrane segment spans residues 424–444 (AGALFVWCTTYSLVGTVLFSN). The Cytoplasmic segment spans residues 445-449 (NYPWT).

It belongs to the PIGV family.

The protein localises to the endoplasmic reticulum membrane. Its pathway is glycolipid biosynthesis; glycosylphosphatidylinositol-anchor biosynthesis. In terms of biological role, mannosyltransferase involved in glycosylphosphatidylinositol-anchor biosynthesis. Transfers the second mannose to the glycosylphosphatidylinositol during GPI precursor assembly. Required for the GPI-mediated endoplasmic reticulum exit and proper targeting to the cell surface of chp. Required for GPI-mediated membrane attachment of chp, qsm and Cont. Essential for microvillar stability in the rhabdomere. The protein is GPI mannosyltransferase 2 of Drosophila melanogaster (Fruit fly).